A 234-amino-acid chain; its full sequence is MKKKKEKEKEKQKSINYYIFFFQYTLVYNTIQINKIYKLFYHVFITKKKNYFSKSNYNSPPKSVFSSGRENVYLPEEYKKKIEKENQENLEILENSMKDASHSKTTSLPFSSSSPQSSSSSSSSSSSSNSSLSCSLIFSSTLSLIKSELIKDDTIKYSESDSKSDSEFDSESNSDFDSESESEYEYEYEYESKSNSEQPIINNYLDHTYIYNFAIVVKAIHYLHHFIKEMLKFV.

The chain crosses the membrane as a helical span at residues 13-32 (KSINYYIFFFQYTLVYNTIQ). Disordered stretches follow at residues 102 to 130 (HSKT…SSNS) and 159 to 185 (ESDS…SEYE). A compositionally biased stretch (low complexity) spans 103 to 130 (SKTTSLPFSSSSPQSSSSSSSSSSSSNS). A compositionally biased stretch (acidic residues) spans 167–185 (EFDSESNSDFDSESESEYE).

It localises to the membrane. This is an uncharacterized protein from Dictyostelium discoideum (Social amoeba).